The following is a 436-amino-acid chain: RNA polymerase sigma-54 factor (436 aa).

Positions 324 to 343 (TLREVADCLSLHESTVSRAI) form a DNA-binding region, H-T-H motif. An RPON box motif is present at residues 413–421 (SRRTVAKYR).

Belongs to the sigma-54 factor family. As to quaternary structure, interacts transiently with the RNAP core.

Sigma factors are initiation factors that promote the attachment of RNA polymerase (RNAP) to specific initiation sites and are then released. This sigma factor is responsible for the expression of the levanase operon. The open complex (sigma-54 and core RNA polymerase) serves as the receptor for receipt of the melting signal from the remotely bound activator protein LevR for the expression of the levanase operon. Associates with the RNAP core only in stationary phase cells. The polypeptide is RNA polymerase sigma-54 factor (sigL) (Bacillus subtilis (strain 168)).